A 376-amino-acid polypeptide reads, in one-letter code: MVAGEASGDTLGADLILSLKKRFPNARFVGIGGQKMIANGFESWYPLEKLSVMGLFEVLKHLPSLLRLRKELIQKLLQLKPDVFIGIDAPDFNFKMEGILKENAIPTIHYVGPSVWAWREKRLLKICKQVDGVLVLFPFETAYYDKYGIPSKFVGHPLTNQVADSPDKHSARQQLGLSSDTPVTGILPGSRSSEINLMIDVYVQVATKLHEAYPQMKFVIPCVNQAAKERVALSISLYGKGIDFILLDQQAQLAMAASDQLIVTSGTATLEAALMQRPLILAIKLHPISYWIMKRLATTKWVGLPNVLAGKCIVPELIQENATVDKIAQTLDKLITDKEMREVQLTEFKKQYDALNQNASELAADAVVKWAKLKND.

It belongs to the LpxB family.

The enzyme catalyses a lipid X + a UDP-2-N,3-O-bis[(3R)-3-hydroxyacyl]-alpha-D-glucosamine = a lipid A disaccharide + UDP + H(+). Its pathway is bacterial outer membrane biogenesis; LPS lipid A biosynthesis. Condensation of UDP-2,3-diacylglucosamine and 2,3-diacylglucosamine-1-phosphate to form lipid A disaccharide, a precursor of lipid A, a phosphorylated glycolipid that anchors the lipopolysaccharide to the outer membrane of the cell. In Hydrogenovibrio crunogenus (strain DSM 25203 / XCL-2) (Thiomicrospira crunogena), this protein is Lipid-A-disaccharide synthase.